We begin with the raw amino-acid sequence, 306 residues long: Ribonuclease Z (306 aa).

Zn(2+)-binding residues include His63, His65, Asp67, His68, His140, Asp211, and His269. Residue Asp67 is the Proton acceptor of the active site.

Belongs to the RNase Z family. In terms of assembly, homodimer. It depends on Zn(2+) as a cofactor.

It catalyses the reaction Endonucleolytic cleavage of RNA, removing extra 3' nucleotides from tRNA precursor, generating 3' termini of tRNAs. A 3'-hydroxy group is left at the tRNA terminus and a 5'-phosphoryl group is left at the trailer molecule.. Its function is as follows. Zinc phosphodiesterase, which displays some tRNA 3'-processing endonuclease activity. Probably involved in tRNA maturation, by removing a 3'-trailer from precursor tRNA. The polypeptide is Ribonuclease Z (Listeria monocytogenes serotype 4b (strain CLIP80459)).